A 1008-amino-acid chain; its full sequence is ATP-dependent DNA/RNA helicase DHX36 (1008 aa).

Positions Met1 to Gly51 are required for recruitment to cytoplasmic stress granules. The disordered stretch occupies residues Met1 to Lys58. The required for the pre-miR-134 transport stretch occupies residues Met1–Ala104. The interval Met1 to Met200 is necessary for nuclear and nucleolar caps localizations. Residues Arg16–Gly48 show a composition bias toward gly residues. A DSM (DHX36-specific motif) region spans residues His53–Lys75. The segment at His53–Lys105 is required for G4-DNA- and G4-RNA-binding. Residues Gln72 to Ile157 are a coiled coil. RecA-like domain regions lie at residues Asn106–Ile386 and Pro387–Leu628. Ser161 is subject to Phosphoserine. In terms of domain architecture, Helicase ATP-binding spans Val217–Pro387. Residue Gly233–Thr238 coordinates ATP. A necessary for interaction with single-stranded DNA at the 3'-end of the G4-DNA structure region spans residues Arg265–Gln317. Residues Asp334–His337 carry the DEAH box motif. Mg(2+) is bound by residues Glu335 and His337. In terms of domain architecture, Helicase C-terminal spans Ala477–Arg647. The tract at residues Trp498–Ser557 is necessary for interaction with single-stranded DNA at the 3'-end of the G4-DNA structure. The short motif at Asp517–Met528 is the Nuclear localization signal element. ATP-binding positions include Ser557 and Arg602 to Arg605. The WH domain stretch occupies residues Pro629–Val698. 3 necessary for interaction with single-stranded DNA at the 3'-end of the G4-DNA structure regions span residues Glu638–Pro697, Asn849–Tyr860, and His870–Tyr900. The tract at residues Pro841 to Val905 is OB-fold-like subdomains. Lys947 carries the post-translational modification N6-acetyllysine. Ser963 is modified (phosphoserine).

Belongs to the DEAD box helicase family. DEAH subfamily. As to quaternary structure, found in a multi-helicase-TICAM1 complex at least composed of DHX36, DDX1, DDX21 and TICAM1; this complex exists in resting cells with or without dsRNA poly(I:C) ligand stimulation. Interacts (via C-terminus) with TICAM1 (via TIR domain). Interacts (via C-terminus) with DDX21; this interaction serves as bridges to TICAM1. Interacts with TERT; this interaction is dependent on the ability of DHX36 to bind to the G-quadruplex RNA (G4-RNA) structure present in the telomerase RNA template component (TERC). Interacts with DKC1; this interaction is dependent on the ability of DHX36 to bind to the G4-RNA structure present in TERC. Interacts with PARN; this interaction stimulates PARN to enhance uPA mRNA decay. Interacts with EXOSC3; this interaction occurs in a RNase-insensitive manner. Interacts with EXOSC10; this interaction occurs in a RNase-insensitive manner. Interacts with ILF3; this interaction occurs in a RNA-dependent manner. Interacts with ELAVL1; this interaction occurs in an RNA-dependent manner. Interacts with DDX5; this interaction occurs in a RNA-dependent manner. Interacts with DDX17; this interaction occurs in a RNA-dependent manner. Interacts with HDAC1; this interaction occurs in a RNA-dependent manner. Interacts with HDAC3; this interaction occurs in a RNA-dependent manner. Interacts with HDAC4. Interacts with AGO1. Interacts with AGO2. Interacts with ERCC6. Requires Mg(2+) as cofactor. Highly expressed in testis.

The protein localises to the nucleus. Its subcellular location is the cytoplasm. It is found in the cytosol. The protein resides in the stress granule. It localises to the nucleus speckle. The protein localises to the chromosome. Its subcellular location is the telomere. It is found in the mitochondrion. The protein resides in the perikaryon. It localises to the cell projection. The protein localises to the dendrite. Its subcellular location is the axon. It catalyses the reaction ATP + H2O = ADP + phosphate + H(+). With respect to regulation, ATPase activity is enhanced in the presence of homomeric poly(U) RNAs, but not by double-stranded DNA (dsDNA), double-stranded RNA (dsRNA) and tRNA. Functionally, multifunctional ATP-dependent helicase that unwinds G-quadruplex (G4) structures. Plays a role in many biological processes such as genomic integrity, gene expression regulations and as a sensor to initiate antiviral responses. G4 structures correspond to helical structures containing guanine tetrads. Binds with high affinity to and unwinds G4 structures that are formed in nucleic acids (G4-DNA and G4-RNA). Plays a role in genomic integrity. Converts the G4-RNA structure present in telomerase RNA template component (TREC) into a double-stranded RNA to promote P1 helix formation that acts as a template boundary ensuring accurate reverse transcription. Plays a role in transcriptional regulation. Resolves G4-DNA structures in promoters of genes, such as YY1, KIT/c-kit and ALPL and positively regulates their expression. Plays a role in post-transcriptional regulation. Unwinds a G4-RNA structure located in the 3'-UTR polyadenylation site of the pre-mRNA TP53 and stimulates TP53 pre-mRNA 3'-end processing in response to ultraviolet (UV)-induced DNA damage. Binds to the precursor-microRNA-134 (pre-miR-134) terminal loop and regulates its transport into the synapto-dendritic compartment. Involved in the pre-miR-134-dependent inhibition of target gene expression and the control of dendritic spine size. Plays a role in the regulation of cytoplasmic mRNA translation and mRNA stability. Binds to both G4-RNA structures and alternative non-quadruplex-forming sequence within the 3'-UTR of the PITX1 mRNA regulating negatively PITX1 protein expression. Binds to both G4-RNA structure in the 5'-UTR and AU-rich elements (AREs) localized in the 3'-UTR of NKX2-5 mRNA to either stimulate protein translation or induce mRNA decay in an ELAVL1-dependent manner, respectively. Also binds to ARE sequences present in several mRNAs mediating exosome-mediated 3'-5' mRNA degradation. Involved in cytoplasmic urokinase-type plasminogen activator (uPA) mRNA decay. Component of a multi-helicase-TICAM1 complex that acts as a cytoplasmic sensor of viral double-stranded RNA (dsRNA) and plays a role in the activation of a cascade of antiviral responses including the induction of pro-inflammatory cytokines via the adapter molecule TICAM1. Required for early embryonic development and hematopoiesis. Involved in the regulation of cardioblast differentiation and proliferation during heart development. Involved in spermatogonia differentiation. May play a role in ossification. In Homo sapiens (Human), this protein is ATP-dependent DNA/RNA helicase DHX36.